A 147-amino-acid polypeptide reads, in one-letter code: Ponticulin-like protein C2 (147 aa).

An N-terminal signal peptide occupies residues 1-20 (MKFTKPLLLLIVAIIASSNA). Asn-118 carries GPI-like-anchor amidated asparagine lipidation. Asn-118 carries N-linked (GlcNAc...) asparagine glycosylation. Residues 119–147 (SSESDSSDSTRIGASFALFALALLSMLAL) constitute a propeptide, removed in mature form.

The protein belongs to the ponticulin family. The GPI-like-anchor contains a phosphoceramide group, rather than a phosphatidyl group.

The protein localises to the cell membrane. The polypeptide is Ponticulin-like protein C2 (ponC2) (Dictyostelium discoideum (Social amoeba)).